We begin with the raw amino-acid sequence, 355 residues long: 3-isopropylmalate dehydrogenase (355 aa).

4 residues coordinate substrate: arginine 90, arginine 100, arginine 128, and aspartate 222. Mg(2+)-binding residues include aspartate 222, aspartate 246, and aspartate 250. 280-292 (GSAPDIAGKGIAN) contributes to the NAD(+) binding site.

It belongs to the isocitrate and isopropylmalate dehydrogenases family. LeuB type 1 subfamily. Homodimer. Mg(2+) serves as cofactor. Mn(2+) is required as a cofactor.

It localises to the cytoplasm. It catalyses the reaction (2R,3S)-3-isopropylmalate + NAD(+) = 4-methyl-2-oxopentanoate + CO2 + NADH. It functions in the pathway amino-acid biosynthesis; L-leucine biosynthesis; L-leucine from 3-methyl-2-oxobutanoate: step 3/4. Its function is as follows. Catalyzes the oxidation of 3-carboxy-2-hydroxy-4-methylpentanoate (3-isopropylmalate) to 3-carboxy-4-methyl-2-oxopentanoate. The product decarboxylates to 4-methyl-2 oxopentanoate. This Burkholderia thailandensis (strain ATCC 700388 / DSM 13276 / CCUG 48851 / CIP 106301 / E264) protein is 3-isopropylmalate dehydrogenase.